Consider the following 410-residue polypeptide: Elongation factor Tu, chloroplastic (410 aa).

Residues 10 to 215 (KPHVNIGTIG…AVDQYIPTPK (206 aa)) enclose the tr-type G domain. The segment at 19–26 (GHVDHGKT) is G1. 19-26 (GHVDHGKT) lines the GTP pocket. Residue Thr-26 participates in Mg(2+) binding. Positions 61-65 (GITIN) are G2. The tract at residues 82 to 85 (DCPG) is G3. Residues 82–86 (DCPGH) and 137–140 (NKQD) contribute to the GTP site. A G4 region spans residues 137 to 140 (NKQD). A G5 region spans residues 175–177 (SAL).

It belongs to the TRAFAC class translation factor GTPase superfamily. Classic translation factor GTPase family. EF-Tu/EF-1A subfamily.

The protein resides in the plastid. The protein localises to the chloroplast. It catalyses the reaction GTP + H2O = GDP + phosphate + H(+). Functionally, GTP hydrolase that promotes the GTP-dependent binding of aminoacyl-tRNA to the A-site of ribosomes during protein biosynthesis. This Nephroselmis olivacea (Green alga) protein is Elongation factor Tu, chloroplastic (tufA).